The sequence spans 1916 residues: Endoribonuclease Dicer (1916 aa).

The 177-residue stretch at 51–227 (LLEAALDHNT…ELEEKIQKLE (177 aa)) folds into the Helicase ATP-binding domain. 64-71 (LNTGSGKT) contacts ATP. Positions 175–178 (DECH) match the DECH box motif. The interval 256–595 (DCGPFTDRSG…LRNKCSKSAD (340 aa)) is required for interaction with PRKRA and TARBP2. The segment at 409–433 (YVSWSDSEDDDDDEEIEEKEKPETN) is disordered. Phosphoserine occurs at positions 413 and 415. Positions 414-425 (DSEDDDDDEEIE) are enriched in acidic residues. Positions 433 to 602 (NFPSPFTNIL…SADGAEADVH (170 aa)) constitute a Helicase C-terminal domain. The region spanning 630-722 (AIGHINRYCA…MPVGKETVKY (93 aa)) is the Dicer dsRNA-binding fold domain. The segment at 726–745 (LDLHDEEETSVPGRPGSTKR) is disordered. A PAZ domain is found at 895-1042 (KFMEDIEKSE…LVPELCAIHP (148 aa)). Phosphoserine is present on residues Ser-1016 and Ser-1160. The region spanning 1276-1403 (DSEQSPSVGY…SEKWEKDEMT (128 aa)) is the RNase III 1 domain. Mg(2+)-binding residues include Glu-1316, Glu-1395, and Glu-1398. 3 positions are modified to phosphoserine: Ser-1456, Ser-1464, and Ser-1466. The disordered stretch occupies residues 1598–1626 (ALDPAQENGSSQQKSLSGSCAAPVGPRSS). Residues 1604–1615 (ENGSSQQKSLSG) are compositionally biased toward polar residues. An RNase III 2 domain is found at 1660-1818 (FETFEKKINY…LAGAIYMDSG (159 aa)). Glu-1699, Asp-1804, and Glu-1807 together coordinate Mg(2+). A DRBM domain is found at 1843–1908 (VPRSPVRELL…ARRALRSLKA (66 aa)). Ser-1862 is subject to Phosphoserine.

The protein belongs to the helicase family. Dicer subfamily. In terms of assembly, component of the RISC loading complex (RLC), or micro-RNA (miRNA) loading complex (miRLC), which is composed of DICER1, AGO2 and TARBP2; DICER1 and TARBP2 are required to process precursor miRNAs (pre-miRNAs) to mature miRNAs and then load them onto AGO2. Note that the trimeric RLC/miRLC is also referred to as RISC. Interacts with DHX9, AGO1, PIWIL1 and PRKRA. Interacts with AGO2, TARBP2, EIF6, MOV10 and RPL7A (60S ribosome subunit); they form a large RNA-induced silencing complex (RISC). Interacts with BCDIN3D. Interacts (via Dicer dsRNA-binding fold domain) with ALOX5 (via PLAT domain); this interaction enhances arachidonate 5-lipoxygenase activity and modifies the miRNA precursor processing activity of DICER1. Mg(2+) serves as cofactor. It depends on Mn(2+) as a cofactor. Isoform 1 is expressed in a wide variety of tissues. Isoform 2 is specifically expressed in oocytes during their growth (at protein level).

Its subcellular location is the cytoplasm. The enzyme catalyses Endonucleolytic cleavage to 5'-phosphomonoester.. In terms of biological role, double-stranded RNA (dsRNA) endoribonuclease playing a central role in short dsRNA-mediated post-transcriptional gene silencing. Cleaves naturally occurring long dsRNAs and short hairpin pre-microRNAs (miRNA) into fragments of twenty-one to twenty-three nucleotides with 3' overhang of two nucleotides, producing respectively short interfering RNAs (siRNA) and mature microRNAs. SiRNAs and miRNAs serve as guide to direct the RNA-induced silencing complex (RISC) to complementary RNAs to degrade them or prevent their translation. Gene silencing mediated by siRNAs, also called RNA interference, controls the elimination of transcripts from mobile and repetitive DNA elements of the genome but also the degradation of exogenous RNA of viral origin for instance. The miRNA pathway on the other side is a mean to specifically regulate the expression of target genes. Functionally, more active than isoform 1 to process long double-stranded RNA into siRNAs. Responsible for the accumulation of endogenous siRNAs observed in mouse oocytes compared to somatic cells and it regulates meiotic spindle organization in female germline. The sequence is that of Endoribonuclease Dicer (Dicer1) from Mus musculus (Mouse).